A 396-amino-acid chain; its full sequence is Probable sugar efflux transporter (396 aa).

The next 12 membrane-spanning stretches (helical) occupy residues 15–35 (VLIM…PVAM), 51–71 (GLMM…AMLA), 84–104 (LFII…FWIL), 109–129 (MCIA…VMRI), 137–157 (QALG…LPIG), 168–188 (VTFG…IRLL), 209–229 (PLLL…FTAY), 245–265 (NFAT…SLLF), 273–293 (PTKF…LLLF), 297–317 (TIIA…CIGL), 333–353 (VATA…ALFG), and 365–385 (IGYT…TTHL).

It belongs to the major facilitator superfamily. SotB (TC 2.A.1.2) family.

It localises to the cell inner membrane. Its function is as follows. Involved in the efflux of sugars. The physiological role may be the reduction of the intracellular concentration of toxic sugars or sugar metabolites. This is Probable sugar efflux transporter from Haemophilus influenzae (strain ATCC 51907 / DSM 11121 / KW20 / Rd).